Consider the following 223-residue polypeptide: Golgi to ER traffic protein 1 (223 aa).

Met1 is a topological domain (lumenal). The helical transmembrane segment at 2 to 21 (SWVVAIAVVFVVVLKVLEYS) threads the bilayer. The Cytoplasmic portion of the chain corresponds to 22-105 (TSYHDLVLQS…QIKGHLKKVK (84 aa)). Residues 56–105 (ENKSISAQDNYAKWTKNNRKLDKLDKEITELGAQLKAHNEQIKGHLKKVK) are a coiled coil. The chain crosses the membrane as a helical span at residues 106-126 (LLLLTVPFLCFKLWKGKHIVY). The Lumenal segment spans residues 127-177 (NLPHHQMFPQLVAGVWSQGWLYLAILPLQLAKSIVTGSSFAIETASFPHMG). A helical membrane pass occupies residues 178–194 (VSLGIWLWALNSVISNI). Topologically, residues 195-223 (EFMTMQLWAKPVSKPSKKLEIVTDEIKVD) are cytoplasmic.

Belongs to the WRB/GET1 family. Component of the Golgi to ER traffic (GET) complex, which is composed of GET1, GET2 and GET3. Within the complex, GET1 and GET2 form a heterotetramer which is stabilized by phosphatidylinositol binding and which binds to the GET3 homodimer.

It is found in the endoplasmic reticulum membrane. Its subcellular location is the golgi apparatus membrane. Its function is as follows. Required for the post-translational delivery of tail-anchored (TA) proteins to the endoplasmic reticulum. Together with GET2, acts as a membrane receptor for soluble GET3, which recognizes and selectively binds the transmembrane domain of TA proteins in the cytosol. The GET complex cooperates with the HDEL receptor ERD2 to mediate the ATP-dependent retrieval of resident ER proteins that contain a C-terminal H-D-E-L retention signal from the Golgi to the ER. This is Golgi to ER traffic protein 1 from Candida glabrata (strain ATCC 2001 / BCRC 20586 / JCM 3761 / NBRC 0622 / NRRL Y-65 / CBS 138) (Yeast).